The chain runs to 161 residues: Allophycocyanin subunit alpha-B (161 aa).

Residue asparagine 71 is modified to N4-methylasparagine. Cysteine 81 is a (2R,3E)-phycocyanobilin binding site.

The protein belongs to the phycobiliprotein family. Heterohexamer of two alpha chains, one alpha-B chain and three beta chains. Contains one covalently linked bilin chromophore.

It is found in the cellular thylakoid membrane. Functionally, light-harvesting photosynthetic bile pigment-protein from the phycobiliprotein complex. Allophycocyanin has a maximum absorption at approximately 654 nanometers. This chain is Allophycocyanin subunit alpha-B (apcD), found in Synechocystis sp. (strain ATCC 27184 / PCC 6803 / Kazusa).